The chain runs to 208 residues: Small ribosomal subunit protein eS1 (208 aa).

This sequence belongs to the eukaryotic ribosomal protein eS1 family.

The polypeptide is Small ribosomal subunit protein eS1 (Saccharolobus solfataricus (strain ATCC 35092 / DSM 1617 / JCM 11322 / P2) (Sulfolobus solfataricus)).